The primary structure comprises 110 residues: Glycine cleavage system H-like protein (110 aa).

One can recognise a Lipoyl-binding domain in the interval 10 to 97; that stretch reads VEKVGDLYVF…PEENWLFKLD (88 aa). ADP-ribosyl aspartic acid is present on Asp27. Position 56 is an N6-lipoyllysine (Lys56).

In terms of assembly, lipoylated GcvH-L directly interacts with SAV0325, which reverses the SirTM-mediated mono-ADP-ribosylation of GcvH-L, and with the oxidoreductase SAV0322. Is lipoylated on K-56 by LplA2 (SAV0327) and then mono-ADP-ribosylated, probably on D-27, by SirTM (SAV0326). The mono-ADP-ribosylation state of GcvH-L might regulate the availability of the lipoyl moiety for redox reactions; ADP-ribosylation would inhibit the interaction of the oxidoreductase with GcvH-L when it is not required, thus ADP-ribosylation of GcvH-L might be acting to keep the response 'off' under non-stress conditions.

May act as a carrier protein for the ROS scavenging lipoyl moiety and/or as a substrate for oxidoreductases such as SAV0322 and SAV0323. The polypeptide is Glycine cleavage system H-like protein (Staphylococcus aureus (strain Mu50 / ATCC 700699)).